A 542-amino-acid chain; its full sequence is Propane 2-monooxygenase, hydroxylase component large subunit (542 aa).

Fe cation is bound by residues Glu97, Glu127, His130, Glu192, Glu226, and His229.

It belongs to the TmoA/XamoA family. As to quaternary structure, the propane 2-monooxygenase multicomponent enzyme system is composed of an electron transfer component and a monooxygenase component interacting with the effector protein MimD. The electron transfer component is composed of a reductase (MimB), and the monooxygenase component is formed by a large subunit (MimA) and a small subunit (MimC). Requires the presence of the chaperonin-like protein MimG to ensure a productive folding, resulting of a soluble MimA, which leads to the active form of MimABCD. It depends on Fe(2+) as a cofactor.

The enzyme catalyses propane + NADH + O2 + H(+) = propan-2-ol + NAD(+) + H2O. It catalyses the reaction acetone + NADH + O2 + H(+) = hydroxyacetone + NAD(+) + H2O. It carries out the reaction butan-2-one + NADH + O2 + H(+) = 1-hydroxy-2-butanone + NAD(+) + H2O. The catalysed reaction is phenol + NADH + O2 + H(+) = hydroquinone + NAD(+) + H2O. Component of the propane 2-monooxygenase multicomponent enzyme system which is involved in the degradation of propane via the O2-dependent hydroxylation of propane. Also involved in the degradation of acetone via the O2-dependent hydroxylation of acetone. Also able to catalyze the oxidation of phenol, methylethylketone (2-butanone), 1-propanol and 2-propanol. The polypeptide is Propane 2-monooxygenase, hydroxylase component large subunit (Mycolicibacterium goodii (Mycobacterium goodii)).